The chain runs to 355 residues: Mannonate dehydratase (355 aa).

The protein belongs to the mannonate dehydratase family. Fe(2+) is required as a cofactor. The cofactor is Mn(2+).

It carries out the reaction D-mannonate = 2-dehydro-3-deoxy-D-gluconate + H2O. Its pathway is carbohydrate metabolism; pentose and glucuronate interconversion. In terms of biological role, catalyzes the dehydration of D-mannonate. The polypeptide is Mannonate dehydratase (Brachyspira hyodysenteriae (strain ATCC 49526 / WA1)).